Here is a 396-residue protein sequence, read N- to C-terminus: NAD(P)H oxidoreductase RTN4IP1, mitochondrial (396 aa).

The transit peptide at 1-40 (MEFLKTCVLRRNACTAVCFWRSKVVQKPSVRRISTTSPRS) directs the protein to the mitochondrion. The region spanning 52–393 (GKNEVLRFTQ…RGHARGKTVI (342 aa)) is the Enoyl reductase (ER) domain. Residues Ser-214, Gly-216, Val-217, Ser-237, Tyr-255, Asn-276, Leu-300, Ala-341, Phe-343, His-386, Ala-387, and Arg-388 each contribute to the NADPH site.

It belongs to the zinc-containing alcohol dehydrogenase family. Quinone oxidoreductase subfamily. In terms of assembly, interacts with RTN4, UQCRC1 and UQCRC2. As to expression, widely expressed in mitochondria-enriched tissues. Found in heart, muscle, kidney, liver, brain and placenta.

Its subcellular location is the mitochondrion matrix. It is found in the mitochondrion outer membrane. It carries out the reaction a 3-demethylubiquinone + NADH + 2 H(+) = a 3-demethylubiquinol + NAD(+). The enzyme catalyses a 3-demethylubiquinone + NADPH + 2 H(+) = a 3-demethylubiquinol + NADP(+). The catalysed reaction is 3-demethylubiquinone-10 + NADH + 2 H(+) = 3-demethylubiquinol-10 + NAD(+). It catalyses the reaction 3-demethylubiquinone-10 + NADPH + 2 H(+) = 3-demethylubiquinol-10 + NADP(+). It functions in the pathway cofactor biosynthesis; ubiquinone biosynthesis. Functionally, NAD(P)H oxidoreductase involved in the ubiquinone biosynthetic pathway. Required for the O-methyltransferase activity of COQ3. Able to catalyze the oxidoreduction of 3-demethylubiquinone into 3-demethylubiquinol in vitro. However, it is unclear if 3-demethylubiquinone constitutes a substrate in vivo. May also play a role in the regulation of retinal ganglion cell (RGC) neurite outgrowth, and hence in the development of the inner retina and optic nerve. Appears to be a potent inhibitor of regeneration following spinal cord injury. This is NAD(P)H oxidoreductase RTN4IP1, mitochondrial from Homo sapiens (Human).